The sequence spans 223 residues: Ribonuclease DdI (223 aa).

The signal sequence occupies residues 1-25; sequence MRLIAALLSVLLIASTAQSTVTIYE. Cys-46 and Cys-51 form a disulfide bridge. Residues His-63, Glu-113, and His-117 contribute to the active site. Residues Cys-78 and Cys-120 are joined by a disulfide bond. A glycan (N-linked (GlcNAc...) asparagine) is linked at Asn-144. Disulfide bonds link Cys-183–Cys-213 and Cys-194–Cys-205.

This sequence belongs to the RNase T2 family.

Its subcellular location is the lysosome. The catalysed reaction is a ribonucleotidyl-ribonucleotide-RNA + H2O = a 3'-end 3'-phospho-ribonucleotide-RNA + a 5'-end dephospho-ribonucleoside-RNA + H(+). Inhibited by Cu(2+) and Zn(2+). In terms of biological role, releases mononucleotides from RNA in the order of 3'-GMP &gt; 3'-UMP &gt; 3'-AMP &gt; 3'-CMP. This chain is Ribonuclease DdI (ddiA), found in Dictyostelium discoideum (Social amoeba).